A 172-amino-acid polypeptide reads, in one-letter code: Trypsin inhibitor DE-3 (172 aa).

Intrachain disulfides connect C39-C83 and C132-C139.

This sequence belongs to the protease inhibitor I3 (leguminous Kunitz-type inhibitor) family.

Its function is as follows. Inhibition of trypsin. The sequence is that of Trypsin inhibitor DE-3 from Erythrina latissima (Broad-leaved coral tree).